The sequence spans 147 residues: Transthyretin (147 aa).

A signal peptide spans 1-20 (MASFRLFLLCLAGLVFVSEA). Cys30 is subject to Sulfocysteine. L-thyroxine is bound at residue Lys35. 4-carboxyglutamate is present on Glu62. Residue Ser72 is modified to Phosphoserine. Glu74 is an L-thyroxine binding site. An N-linked (GlcNAc...) asparagine glycan is attached at Asn118. An L-thyroxine-binding site is contributed by Ser137.

Belongs to the transthyretin family. Homotetramer. Dimer of dimers. In the homotetramer, subunits assemble around a central channel that can accommodate two ligand molecules. Interacts with RBP4. Post-translationally, sulfonation of the reactive cysteine Cys-30 enhances the stability of the native conformation of TTR, avoiding misassembly of the protein leading to amyloid formation. In terms of tissue distribution, detected in serum (at protein level).

The protein resides in the secreted. Its function is as follows. Thyroid hormone-binding protein. Probably transports thyroxine from the bloodstream to the brain. This chain is Transthyretin (TTR), found in Bos taurus (Bovine).